Reading from the N-terminus, the 252-residue chain is uncharacterized protein (252 aa).

Residues 1–22 form the signal peptide; sequence MIHSKRLRLWLYLVLLAVFISA. Cys-23 is lipidated: N-palmitoyl cysteine. Cys-23 carries the S-diacylglycerol cysteine lipid modification.

Belongs to the staphylococcal tandem lipoprotein family.

The protein localises to the cell membrane. This is an uncharacterized protein from Staphylococcus aureus (strain MW2).